A 603-amino-acid polypeptide reads, in one-letter code: Serine/threonine-protein kinase PLK1 (603 aa).

Lysine 19 participates in a covalent cross-link: Glycyl lysine isopeptide (Lys-Gly) (interchain with G-Cter in ubiquitin). The Protein kinase domain maps to 53–305; it reads YVRGRFLGKG…IHELLNDEFF (253 aa). ATP is bound by residues 59–67 and lysine 82; that span reads LGKGGFAKC. Serine 103 is modified (phosphoserine). ATP is bound at residue glutamate 131. The residue at position 137 (serine 137) is a Phosphoserine. Aspartate 176 serves as the catalytic Proton acceptor. Residues 178–181 and aspartate 194 contribute to the ATP site; that span reads KLGN. The tract at residues 194-221 is activation loop; the sequence is DFGLATKVEYEGERKKTLCGTPNYIAPE. Threonine 210 bears the Phosphothreonine; by AURKA mark. The residue at position 214 (threonine 214) is a Phosphothreonine. 2 positions are modified to phosphoserine; by autocatalysis: serine 269 and serine 335. Residues 337–340 carry the D-box that targets the protein for proteasomal degradation in anaphase motif; the sequence is RKPL. A Glycyl lysine isopeptide (Lys-Gly) (interchain with G-Cter in SUMO2) cross-link involves residue lysine 338. Phosphoserine is present on residues serine 375 and serine 450. A POLO box 1 domain is found at 410 to 488; it reads WVSKWVDYSD…LNYFRNYMSE (79 aa). A Glycyl lysine isopeptide (Lys-Gly) (interchain with G-Cter in ubiquitin) cross-link involves residue lysine 492. Residues 493–507 form a linker region; that stretch reads AGANITPREGDELAR. Phosphothreonine is present on threonine 498. The POLO box 2 domain maps to 510–592; it reads YLRTWFRTRS…ARTMVDKLLS (83 aa). Residues 538 to 540 are important for interaction with phosphorylated proteins; it reads HTK.

Belongs to the protein kinase superfamily. Ser/Thr protein kinase family. CDC5/Polo subfamily. In terms of assembly, interacts with CEP170 and EVI5. Interacts and phosphorylates ERCC6L. Interacts with FAM29A. Interacts with SLX4/BTBD12 and TTDN1. Interacts with BUB1B. Interacts (via POLO-box domain) with the phosphorylated form of BUB1, CENPU and CDC25C. Interacts with isoform 3 of SGO1. Interacts with BORA, KIF2A and AURKA. Interacts with TOPORS and CYLD. Interacts with ECT2; the interaction is stimulated upon phosphorylation of ECT2 on 'Thr-444'. Interacts with PRC1. Interacts with KIF20A/MKLP2 (when phosphorylated), leading to the recruitment at the central spindle. Interacts (via POLO box domains) with PPP1R12A/MYPT1 (when previously phosphorylated by CDK1). Part of an astrin (SPAG5)-kinastrin (SKAP) complex containing KNSTRN, SPAG5, PLK1, DYNLL1 and SGO2A. Interacts with BIRC6/bruce. Interacts with CDK1-phosphorylated DCTN6 during mitotic prometaphase; the interaction facilitates recruitment to kinetochores. Interacts with CDK1-phosphorylated FRY; this interaction occurs in mitotic cells, but not in interphase cells. FRY interaction facilitates AURKA-mediated PLK1 phosphorylation. Interacts with CEP68; the interaction phosphorylates CEP68. Interacts (via POLO-box domain) with DCTN1. Interacts with CEP20 in later G1, S, G2 and M phases of the cell cycle; this interaction recruits PLK1 to centrosomes, a step required for S phase progression. Interacts with HSF1; this interaction increases upon heat shock but does not modulate neither HSF1 homotrimerization nor DNA-binding activities. Interacts with HNRNPU; this interaction induces phosphorylation of HNRNPU in mitosis. Interacts (via its N-terminus) with RIOK2. Interacts with KLHL22. Interacts (via POLO box domains) with NEDD9/HEF1 (via C-terminus). Interacts (via RVxF motif) with FIRRM; regulates PLK1 kinase activity. Interacts with SKA3; the interaction promotes the stability of PLK1. Interacts with the MTMR3:MTMR4 heterooligomer; brings CEP55 and PLK1 together during early mitosis, regulating the phosphorylation of CEP55 by PLK1 and its recruitment to the midbody where it can mediate cell abscission. Post-translationally, catalytic activity is enhanced by phosphorylation of Thr-210. Phosphorylation at Thr-210 is first detected on centrosomes in the G2 phase of the cell cycle, peaks in prometaphase and gradually disappears from centrosomes during anaphase. Dephosphorylation at Thr-210 at centrosomes is probably mediated by protein phosphatase 1C (PP1C), via interaction with PPP1R12A/MYPT1. Autophosphorylation and phosphorylation of Ser-137 may not be significant for the activation of PLK1 during mitosis, but may enhance catalytic activity during recovery after DNA damage checkpoint. Phosphorylated in vitro by STK10. In terms of processing, ubiquitinated by the anaphase promoting complex/cyclosome (APC/C) in anaphase and following DNA damage, leading to its degradation by the proteasome. Ubiquitination is mediated via its interaction with FZR1/CDH1. Ubiquitination and subsequent degradation prevents entry into mitosis and is essential to maintain an efficient G2 DNA damage checkpoint. Monoubiquitination at Lys-492 by the BCR(KLHL22) ubiquitin ligase complex does not lead to degradation: it promotes PLK1 dissociation from phosphoreceptor proteins and subsequent removal from kinetochores, allowing silencing of the spindle assembly checkpoint (SAC) and chromosome segregation. As to expression, newborn and adult spleen, fetal and newborn kidney, liver, brain, thymus and adult bone marrow, thymus, ovary and testes.

It is found in the nucleus. It localises to the chromosome. The protein localises to the centromere. Its subcellular location is the kinetochore. The protein resides in the cytoplasm. It is found in the cytoskeleton. It localises to the microtubule organizing center. The protein localises to the centrosome. Its subcellular location is the spindle. The protein resides in the midbody. The catalysed reaction is L-seryl-[protein] + ATP = O-phospho-L-seryl-[protein] + ADP + H(+). The enzyme catalyses L-threonyl-[protein] + ATP = O-phospho-L-threonyl-[protein] + ADP + H(+). Its activity is regulated as follows. Activated by phosphorylation of Thr-210 by AURKA; phosphorylation by AURKA is enhanced by BORA. Once activated, activity is stimulated by binding target proteins. Binding of target proteins has no effect on the non-activated kinase. Several inhibitors targeting PLKs are currently in development and are under investigation in a growing number of clinical trials, such as BI 2536, an ATP-competitive PLK1 inhibitor or BI 6727, a dihydropteridinone that specifically inhibits the catalytic activity of PLK1. Its function is as follows. Serine/threonine-protein kinase that performs several important functions throughout M phase of the cell cycle, including the regulation of centrosome maturation and spindle assembly, the removal of cohesins from chromosome arms, the inactivation of anaphase-promoting complex/cyclosome (APC/C) inhibitors, and the regulation of mitotic exit and cytokinesis. Polo-like kinase proteins act by binding and phosphorylating proteins that are already phosphorylated on a specific motif recognized by the POLO box domains. Phosphorylates BORA, BUB1B/BUBR1, CCNB1, CDC25C, CEP55, ECT2, ERCC6L, FBXO5/EMI1, FOXM1, KIF20A/MKLP2, CENPU, NEDD1, NINL, NPM1, NUDC, PKMYT1/MYT1, KIZ, MRE11, PPP1R12A/MYPT1, POLQ, PRC1, RACGAP1/CYK4, RAD51, RHNO1, SGO1, STAG2/SA2, TEX14, TOPORS, p73/TP73, TPT1, WEE1 and HNRNPU. Plays a key role in centrosome functions and the assembly of bipolar spindles by phosphorylating KIZ, NEDD1 and NINL. NEDD1 phosphorylation promotes subsequent targeting of the gamma-tubulin ring complex (gTuRC) to the centrosome, an important step for spindle formation. Phosphorylation of NINL component of the centrosome leads to NINL dissociation from other centrosomal proteins. Involved in mitosis exit and cytokinesis by phosphorylating CEP55, ECT2, KIF20A/MKLP2, CENPU, PRC1 and RACGAP1. Recruited at the central spindle by phosphorylating and docking PRC1 and KIF20A/MKLP2; creates its own docking sites on PRC1 and KIF20A/MKLP2 by mediating phosphorylation of sites subsequently recognized by the POLO box domains. Phosphorylates RACGAP1, thereby creating a docking site for the Rho GTP exchange factor ECT2 that is essential for the cleavage furrow formation. Promotes the central spindle recruitment of ECT2. Plays a central role in G2/M transition of mitotic cell cycle by phosphorylating CCNB1, CDC25C, FOXM1, CENPU, PKMYT1/MYT1, PPP1R12A/MYPT1 and WEE1. Part of a regulatory circuit that promotes the activation of CDK1 by phosphorylating the positive regulator CDC25C and inhibiting the negative regulators WEE1 and PKMYT1/MYT1. Also acts by mediating phosphorylation of cyclin-B1 (CCNB1) on centrosomes in prophase. Phosphorylates FOXM1, a key mitotic transcription regulator, leading to enhance FOXM1 transcriptional activity. Involved in kinetochore functions and sister chromatid cohesion by phosphorylating BUB1B/BUBR1, FBXO5/EMI1 and STAG2/SA2. PLK1 is high on non-attached kinetochores suggesting a role of PLK1 in kinetochore attachment or in spindle assembly checkpoint (SAC) regulation. Required for kinetochore localization of BUB1B. Regulates the dissociation of cohesin from chromosomes by phosphorylating cohesin subunits such as STAG2/SA2. Phosphorylates SGO1: required for spindle pole localization of isoform 3 of SGO1 and plays a role in regulating its centriole cohesion function. Mediates phosphorylation of FBXO5/EMI1, a negative regulator of the APC/C complex during prophase, leading to FBXO5/EMI1 ubiquitination and degradation by the proteasome. Acts as a negative regulator of p53 family members: phosphorylates TOPORS, leading to inhibit the sumoylation of p53/TP53 and simultaneously enhance the ubiquitination and subsequent degradation of p53/TP53. Phosphorylates the transactivation domain of the transcription factor p73/TP73, leading to inhibit p73/TP73-mediated transcriptional activation and pro-apoptotic functions. Phosphorylates BORA, and thereby promotes the degradation of BORA. Contributes to the regulation of AURKA function. Also required for recovery after DNA damage checkpoint and entry into mitosis. Phosphorylates MISP, leading to stabilization of cortical and astral microtubule attachments required for proper spindle positioning. Together with MEIKIN, acts as a regulator of kinetochore function during meiosis I: required both for mono-orientation of kinetochores on sister chromosomes and protection of centromeric cohesin from separase-mediated cleavage. Phosphorylates CEP68 and is required for its degradation. Regulates nuclear envelope breakdown during prophase by phosphorylating DCTN1 resulting in its localization in the nuclear envelope. Phosphorylates the heat shock transcription factor HSF1, promoting HSF1 nuclear translocation upon heat shock. Phosphorylates HSF1 also in the early mitotic period; this phosphorylation regulates HSF1 localization to the spindle pole, the recruitment of the SCF(BTRC) ubiquitin ligase complex induicing HSF1 degradation, and hence mitotic progression. Regulates mitotic progression by phosphorylating RIOK2. Through the phosphorylation of DZIP1 regulates the localization during mitosis of the BBSome, a ciliary protein complex involved in cilium biogenesis. Regulates DNA repair during mitosis by mediating phosphorylation of POLQ and RHNO1, thereby promoting POLQ recruitment to DNA damage sites. Phosphorylates ATXN10 which may play a role in the regulation of cytokinesis and may stimulate the proteasome-mediated degradation of ATXN10. The protein is Serine/threonine-protein kinase PLK1 (Plk1) of Mus musculus (Mouse).